The primary structure comprises 271 residues: PH domain-containing protein ECU06_0670 (271 aa).

Positions 26–145 (AKKTLDSSES…EKKNDAFIPP (120 aa)) are disordered. Basic and acidic residues-rich tracts occupy residues 42 to 64 (EVGEVDEVKGMETDAEKKDEPAM), 92 to 120 (QPEKQEAADGEDSSKKESPREEQTPLLDK), and 128 to 140 (EENAKPSSEKKND). Positions 166-267 (NTVVEGWMWK…WVEKLNETIR (102 aa)) constitute a PH domain.

This chain is PH domain-containing protein ECU06_0670, found in Encephalitozoon cuniculi (strain GB-M1) (Microsporidian parasite).